The following is a 201-amino-acid chain: Dermatopontin (201 aa).

The first 18 residues, 1-18 (MDLTLLWVLLPLVTVAWG), serve as a signal peptide directing secretion. At Gln-19 the chain carries Pyrrolidone carboxylic acid. Residue Tyr-23 is modified to Sulfotyrosine. Repeat copies occupy residues 26–79 (SYHQ…ACMP), 70–75 (DRQWNY), 80–135 (TPQS…CCRY), and 125–130 (DREWQF). Positions 26-135 (SYHQYHDYSD…REWQFYCCRY (110 aa)) are 2 X 53-55 AA tandem repeats. Disulfide bonds link Cys-50/Cys-77, Cys-90/Cys-132, Cys-106/Cys-133, Cys-139/Cys-196, and Cys-143/Cys-189. The 3 X 6 AA tandem repeats of D-R-[EQ]-W-[NQK]-[FY] stretch occupies residues 70–186 (DRQWNYACMP…AVERDRQWKF (117 aa)). Tyr-162, Tyr-164, Tyr-166, and Tyr-167 each carry sulfotyrosine. Residues 181-186 (DRQWKF) form a 2-3 repeat. Tyr-194 carries the sulfotyrosine modification.

The protein belongs to the dermatopontin family. Interacts with TGFB1, DCN and collagen. Sulfated on tyrosine residue(s). Expressed in skeletal muscle, heart, pancreas, skin and cultured fibroblasts.

It localises to the secreted. The protein resides in the extracellular space. The protein localises to the extracellular matrix. Functionally, seems to mediate adhesion by cell surface integrin binding. May serve as a communication link between the dermal fibroblast cell surface and its extracellular matrix environment. Enhances TGFB1 activity. Inhibits cell proliferation. Accelerates collagen fibril formation, and stabilizes collagen fibrils against low-temperature dissociation. In Bos taurus (Bovine), this protein is Dermatopontin (DPT).